A 230-amino-acid chain; its full sequence is Probable caffeoyl-CoA O-methyltransferase 1 (230 aa).

Residues Thr52, Asp74, Gly76–Val77, Ser82, Asp100, Ala129, Asp151, Asp153, and Tyr160 contribute to the S-adenosyl-L-methionine site. Asp151 contributes to the a divalent metal cation binding site. A divalent metal cation is bound by residues Asp177 and Asn178.

This sequence belongs to the class I-like SAM-binding methyltransferase superfamily. Cation-dependent O-methyltransferase family. CCoAMT subfamily.

The enzyme catalyses (E)-caffeoyl-CoA + S-adenosyl-L-methionine = (E)-feruloyl-CoA + S-adenosyl-L-homocysteine + H(+). In Dictyostelium discoideum (Social amoeba), this protein is Probable caffeoyl-CoA O-methyltransferase 1 (omt5).